The primary structure comprises 237 residues: Mitochondrial inner membrane protease atp23 (237 aa).

The span at 1 to 18 (MSTSESSNNGSQPGNQDT) shows a compositional bias: polar residues. Residues 1–24 (MSTSESSNNGSQPGNQDTGYIPGD) form a disordered region. His-136 serves as a coordination point for a divalent metal cation. Residue Glu-137 is part of the active site. His-140 serves as a coordination point for a divalent metal cation.

Belongs to the peptidase M76 family.

It is found in the mitochondrion inner membrane. In terms of biological role, has a dual role in the assembly of mitochondrial ATPase. Acts as a protease that removes N-terminal residues of mitochondrial ATPase CF(0) subunit 6 at the intermembrane space side. Also involved in the correct assembly of the membrane-embedded ATPase CF(0) particle, probably mediating association of subunit 6 with the subunit 9 ring. The sequence is that of Mitochondrial inner membrane protease atp23 (atp23) from Aspergillus niger (strain ATCC MYA-4892 / CBS 513.88 / FGSC A1513).